The following is a 189-amino-acid chain: Adenylate kinase (189 aa).

Ala-10–Thr-15 lines the ATP pocket. The interval Ser-30–Val-59 is NMP. Residues Thr-31, Arg-36, Glu-57–Val-59, Gly-85–Arg-88, and Gln-92 each bind AMP. The segment at Lys-126–Asp-136 is LID. Arg-127 provides a ligand contact to ATP. Positions 133 and 144 each coordinate AMP. Ala-172 is a binding site for ATP.

It belongs to the adenylate kinase family. In terms of assembly, monomer.

The protein resides in the cytoplasm. The enzyme catalyses AMP + ATP = 2 ADP. It participates in purine metabolism; AMP biosynthesis via salvage pathway; AMP from ADP: step 1/1. In terms of biological role, catalyzes the reversible transfer of the terminal phosphate group between ATP and AMP. Plays an important role in cellular energy homeostasis and in adenine nucleotide metabolism. In Caulobacter sp. (strain K31), this protein is Adenylate kinase.